The primary structure comprises 191 residues: Transcription factor HES-2 (191 aa).

The tract at residues methionine 1 to serine 26 is disordered. The region spanning leucine 28 to isoleucine 85 is the bHLH domain. Residues tyrosine 97–leucine 130 form the Orange domain. Polar residues-rich tracts occupy residues arginine 159–serine 173 and glutamine 182–tryptophan 191. Positions arginine 159–tryptophan 191 are disordered. The WRPW motif signature appears at tryptophan 188–tryptophan 191.

In terms of assembly, transcription repression requires formation of a complex with a corepressor protein of the Groucho/TLE family. Homodimer, and heterodimer with the other bHLH proteins neurod1, neurod4/ath3, hes1/hairy1 and hes6r. Weakly interacts with the bHLH protein hey1/hrt1. In terms of tissue distribution, expressed in the animal half of the early cleavage stage embryo. During neurulation and organogenesis, the otic vesicles and retina are the main sites of expression; expression in otic placodes begins as early as stage 13.5, persisting in the otic vesicles at stage 30 and beyond. Also transiently expressed in the olfactory placodes. In addition, weakly expressed in primary neurons. Expression in the retina begins at stage 21, and is seen throughout the neural retina by stage 30. From stage 35 onwards, expression progressively declines in the central retina, while remaining high in the margins. At stage 41, expression becomes restricted to the ciliary marginal zone (CMZ) of the retina, the only region where retinogenesis is still occurring.

The protein resides in the nucleus. In terms of biological role, transcriptional repressor. Essential in the retina to govern glial versus neuronal differentiation. Promotes gliogenesis through the inhibition of neuronal differentiation by at least two distinct mechanisms; represses proneural gene transcription, and also physically interacts with proneural proteins, including neurod1. This Xenopus laevis (African clawed frog) protein is Transcription factor HES-2 (hes2).